Here is an 858-residue protein sequence, read N- to C-terminus: Lysine-specific demethylase JMJ706 (858 aa).

The 42-residue stretch at 103–144 folds into the JmjN domain; that stretch reads CPVYYPTKEEFEDPIGYIQKIAPVASKYGICKIVSPVSASVP. The 171-residue stretch at 250 to 420 folds into the JmjC domain; that stretch reads KSNWNLKNFS…LGSVASRRYA (171 aa). Residues histidine 293, glutamate 295, and histidine 388 each coordinate Fe cation. Positions 737 to 746 are enriched in basic and acidic residues; sequence QHNKRPEDYG. 2 disordered regions span residues 737-791 and 829-858; these read QHNK…SAKQ and SSST…WPAI. Residues 829 to 844 show a composition bias toward polar residues; that stretch reads SSSTNRVVEQGSSGQR.

The cofactor is Fe(2+).

It localises to the nucleus. The enzyme catalyses N(6),N(6),N(6)-trimethyl-L-lysyl(9)-[histone H3] + 2 2-oxoglutarate + 2 O2 = N(6)-methyl-L-lysyl(9)-[histone H3] + 2 formaldehyde + 2 succinate + 2 CO2. Histone demethylase that demethylates 'Lys-9' (H3K9me) of histone H3 with a specific activity for H3K9me3 and H3K9me2. No activity on H3K4me3, H3K9me1, H3K27me2 and H3K36me3/2. Involved in the control of floral organ development by demethylating H3K9me3 and H3K9me2 in the promoter regions of DH1 and MADS47. The 'Lys-9' demethylation of these two genes is required for induction of their expression. The polypeptide is Lysine-specific demethylase JMJ706 (JMJ706) (Oryza sativa subsp. japonica (Rice)).